A 283-amino-acid polypeptide reads, in one-letter code: MAPSSAHNNGFYVLMLVGIVVSTMVATCAGSFYQDFDLTWGGDRAKIFNGGQLLSLSLDKVSGSGFKSKKEYLFGRIDMQLKLVAGNSAGTVTAYYLSSQGPTHDEIDFEFLGNLSGDPYILHTNIFTQGKGNREQQFYLWFDPTRNFHTYSIIWKPQHIIFLVDNTPIRVFKNAEPLGVPFPKNQPMRIYSSLWNADDWATRGGLVKTDWSKAPFTAYYRNFKAIEFSSKSSISNSGAEYEANELDAYSRRRLRWVQKYFMIYNYCSDLKRFPQGLPAECKR.

An N-terminal signal peptide occupies residues 1–30 (MAPSSAHNNGFYVLMLVGIVVSTMVATCAG). In terms of domain architecture, GH16 spans 31 to 220 (SFYQDFDLTW…WSKAPFTAYY (190 aa)). The Nucleophile role is filled by E106. Residue E110 is the Proton donor of the active site. E110 contributes to the xyloglucan binding site. N114 carries N-linked (GlcNAc...) asparagine glycosylation. Residues 123 to 125 (HTN), 133 to 135 (NRE), 199 to 200 (DW), G204, and R272 contribute to the xyloglucan site. Residues C267 and C281 are joined by a disulfide bond.

The protein belongs to the glycosyl hydrolase 16 family. Contains at least one intrachain disulfide bond essential for its enzymatic activity. In terms of processing, N-glycosylated; not essential for its enzymatic activity.

The protein resides in the secreted. It is found in the cell wall. The protein localises to the extracellular space. It localises to the apoplast. It catalyses the reaction breaks a beta-(1-&gt;4) bond in the backbone of a xyloglucan and transfers the xyloglucanyl segment on to O-4 of the non-reducing terminal glucose residue of an acceptor, which can be a xyloglucan or an oligosaccharide of xyloglucan.. Its function is as follows. Catalyzes xyloglucan endohydrolysis (XEH) and/or endotransglycosylation (XET). Cleaves and religates xyloglucan polymers, an essential constituent of the primary cell wall, and thereby participates in cell wall construction of growing tissues. In Glycine max (Soybean), this protein is Xyloglucan endotransglucosylase/hydrolase 2.